The primary structure comprises 121 residues: MGCASAKHVATVQNEEEAQKGKNYQNGDVFGDEYRIKPVEEVKYMKNGAEEEQKIAARNQENLEKSASSNVRLKTNKEVPGLVHQPRANMHISESQQEFFRMLDEKIEKGRDYCSEEEDIT.

Disordered regions lie at residues 1-28 (MGCA…QNGD) and 60-82 (QENL…VPGL). A phosphoserine mark is found at Ser-95 and Ser-115.

In terms of tissue distribution, expressed in spleen, prostate, testis and uterus.

This is an uncharacterized protein from Homo sapiens (Human).